Reading from the N-terminus, the 444-residue chain is Signal recognition particle 54 kDa protein (444 aa).

GTP contacts are provided by residues Gly104 to Thr111, Asp184 to Arg188, and Thr242 to Asp245.

Belongs to the GTP-binding SRP family. SRP54 subfamily. Part of the signal recognition particle protein translocation system, which is composed of SRP and FtsY. Archaeal SRP consists of a 7S RNA molecule of 300 nucleotides and two protein subunits: SRP54 and SRP19.

Its subcellular location is the cytoplasm. The enzyme catalyses GTP + H2O = GDP + phosphate + H(+). Involved in targeting and insertion of nascent membrane proteins into the cytoplasmic membrane. Binds to the hydrophobic signal sequence of the ribosome-nascent chain (RNC) as it emerges from the ribosomes. The SRP-RNC complex is then targeted to the cytoplasmic membrane where it interacts with the SRP receptor FtsY. This Methanothrix thermoacetophila (strain DSM 6194 / JCM 14653 / NBRC 101360 / PT) (Methanosaeta thermophila) protein is Signal recognition particle 54 kDa protein.